The primary structure comprises 344 residues: Glucan endo-1,3-beta-glucosidase (344 aa).

The signal sequence occupies residues 1 to 27; the sequence is MALTRNRPFVVVLLLGFVIMSTITIGA. Glu123 acts as the Proton donor in catalysis. Glu268 acts as the Nucleophile in catalysis.

It belongs to the glycosyl hydrolase 17 family.

It carries out the reaction Hydrolysis of (1-&gt;3)-beta-D-glucosidic linkages in (1-&gt;3)-beta-D-glucans.. Implicated in the defense of plants against pathogens. The polypeptide is Glucan endo-1,3-beta-glucosidase (Vitis vinifera (Grape)).